The primary structure comprises 397 residues: 3-ketoacyl-CoA thiolase, mitochondrial (397 aa).

A mitochondrion; not cleaved-targeting transit peptide spans Met1–Pro16. Lys25 carries the N6-acetyllysine; alternate modification. Lys25 carries the post-translational modification N6-succinyllysine; alternate. The active-site Acyl-thioester intermediate is the Cys92. Position 119 is a phosphothreonine (Thr119). The residue at position 121 (Ser121) is a Phosphoserine. Tyr127 carries the post-translational modification Phosphotyrosine. The residue at position 136 (Thr136) is a Phosphothreonine. Lys137 is modified (N6-acetyllysine; alternate). The residue at position 137 (Lys137) is an N6-succinyllysine; alternate. Ser140 carries the phosphoserine modification. 4 positions are modified to N6-acetyllysine; alternate: Lys143, Lys171, Lys191, and Lys209. 4 positions are modified to N6-succinyllysine; alternate: Lys143, Lys171, Lys191, and Lys209. Residues Lys212 and Lys214 each carry the N6-succinyllysine modification. CoA is bound by residues Arg224 and Thr227. Lys234 bears the N6-acetyllysine; alternate mark. Lys234 is modified (N6-succinyllysine; alternate). Lys240 bears the N6-succinyllysine mark. Residue Lys241 is modified to N6-acetyllysine. Ser251 is a binding site for CoA. An N6-acetyllysine mark is found at Lys269 and Lys270. Residue Lys305 is modified to N6-acetyllysine; alternate. The residue at position 305 (Lys305) is an N6-succinyllysine; alternate. Phosphoserine is present on Ser310. Lys312 carries the post-translational modification N6-acetyllysine; alternate. Lys312 carries the N6-succinyllysine; alternate modification. Ser333 carries the post-translational modification Phosphoserine. N6-acetyllysine occurs at positions 340 and 375. Cys382 (proton donor/acceptor) is an active-site residue.

The protein belongs to the thiolase-like superfamily. Thiolase family. In terms of assembly, homotetramer. Interacts with BNIP3.

It localises to the mitochondrion. It carries out the reaction an acyl-CoA + acetyl-CoA = a 3-oxoacyl-CoA + CoA. The enzyme catalyses 2 acetyl-CoA = acetoacetyl-CoA + CoA. It catalyses the reaction acetyl-CoA + H2O = acetate + CoA + H(+). The catalysed reaction is propanoyl-CoA + H2O = propanoate + CoA + H(+). It carries out the reaction butanoyl-CoA + H2O = butanoate + CoA + H(+). The enzyme catalyses hexanoyl-CoA + H2O = hexanoate + CoA + H(+). It catalyses the reaction octanoyl-CoA + H2O = octanoate + CoA + H(+). The catalysed reaction is decanoyl-CoA + H2O = decanoate + CoA + H(+). It carries out the reaction dodecanoyl-CoA + H2O = dodecanoate + CoA + H(+). The enzyme catalyses tetradecanoyl-CoA + H2O = tetradecanoate + CoA + H(+). It catalyses the reaction hexadecanoyl-CoA + H2O = hexadecanoate + CoA + H(+). It participates in lipid metabolism; fatty acid beta-oxidation. In the production of energy from fats, this is one of the enzymes that catalyzes the last step of the mitochondrial beta-oxidation pathway, an aerobic process breaking down fatty acids into acetyl-CoA. Using free coenzyme A/CoA, catalyzes the thiolytic cleavage of medium- to long-chain unbranched 3-oxoacyl-CoAs into acetyl-CoA and a fatty acyl-CoA shortened by two carbon atoms. Also catalyzes the condensation of two acetyl-CoA molecules into acetoacetyl-CoA and could be involved in the production of ketone bodies. Also displays hydrolase activity on various fatty acyl-CoAs. Thereby, could be responsible for the production of acetate in a side reaction to beta-oxidation. Abolishes BNIP3-mediated apoptosis and mitochondrial damage. The protein is 3-ketoacyl-CoA thiolase, mitochondrial (ACAA2) of Bos taurus (Bovine).